Reading from the N-terminus, the 167-residue chain is Gametocyte-specific factor 1 (167 aa).

2 consecutive CHHC U11-48K-type zinc fingers follow at residues 14–41 (LLQC…RKNH) and 48–75 (LATC…DDKS). Zn(2+) contacts are provided by C17, H23, H33, C37, C51, H57, H67, and C71.

This sequence belongs to the UPF0224 (FAM112) family.

It localises to the cytoplasm. Functionally, required for spermatogenesis and is involved in the suppression of retrotransposon transcription in male germ cells. The polypeptide is Gametocyte-specific factor 1 (GTSF1) (Bos taurus (Bovine)).